A 124-amino-acid chain; its full sequence is Small ribosomal subunit protein bS6 (124 aa).

The protein belongs to the bacterial ribosomal protein bS6 family.

Functionally, binds together with bS18 to 16S ribosomal RNA. This chain is Small ribosomal subunit protein bS6, found in Rippkaea orientalis (strain PCC 8801 / RF-1) (Cyanothece sp. (strain PCC 8801)).